The primary structure comprises 452 residues: Maltoporin (452 aa).

Residues 1-25 (MMITLRKLPLAVAVAAGVMSAQAMA) form the signal peptide.

Belongs to the porin LamB (TC 1.B.3) family. In terms of assembly, homotrimer formed of three 18-stranded antiparallel beta-barrels, containing three independent channels.

It is found in the cell outer membrane. It carries out the reaction beta-maltose(in) = beta-maltose(out). Functionally, involved in the transport of maltose and maltodextrins. This Salmonella newport (strain SL254) protein is Maltoporin.